The following is a 183-amino-acid chain: Threonylcarbamoyl-AMP synthase (183 aa).

The YrdC-like domain occupies 1 to 183; that stretch reads MNITQIIEKL…LFTNQLVRQG (183 aa).

This sequence belongs to the SUA5 family. TsaC subfamily.

Its subcellular location is the cytoplasm. It carries out the reaction L-threonine + hydrogencarbonate + ATP = L-threonylcarbamoyladenylate + diphosphate + H2O. Functionally, required for the formation of a threonylcarbamoyl group on adenosine at position 37 (t(6)A37) in tRNAs that read codons beginning with adenine. Catalyzes the conversion of L-threonine, HCO(3)(-)/CO(2) and ATP to give threonylcarbamoyl-AMP (TC-AMP) as the acyladenylate intermediate, with the release of diphosphate. The polypeptide is Threonylcarbamoyl-AMP synthase (Histophilus somni (strain 129Pt) (Haemophilus somnus)).